Here is a 444-residue protein sequence, read N- to C-terminus: tRNA modification GTPase MnmE (444 aa).

Residues Arg23, Glu82, and Lys121 each coordinate (6S)-5-formyl-5,6,7,8-tetrahydrofolate. Positions 216–365 constitute a TrmE-type G domain; the sequence is GTSIVLAGLP…LKQALQKWLN (150 aa). K(+) is bound at residue Asn226. Residues 226 to 231, 245 to 251, and 270 to 273 contribute to the GTP site; these read NAGKSS, TDIPGTT, and DSAG. Ser230 contributes to the Mg(2+) binding site. 3 residues coordinate K(+): Thr245, Ile247, and Thr250. Thr251 contacts Mg(2+). Residue Lys444 coordinates (6S)-5-formyl-5,6,7,8-tetrahydrofolate.

Belongs to the TRAFAC class TrmE-Era-EngA-EngB-Septin-like GTPase superfamily. TrmE GTPase family. As to quaternary structure, homodimer. Heterotetramer of two MnmE and two MnmG subunits. K(+) is required as a cofactor.

It is found in the cytoplasm. In terms of biological role, exhibits a very high intrinsic GTPase hydrolysis rate. Involved in the addition of a carboxymethylaminomethyl (cmnm) group at the wobble position (U34) of certain tRNAs, forming tRNA-cmnm(5)s(2)U34. The chain is tRNA modification GTPase MnmE from Chlamydia trachomatis serovar L2 (strain ATCC VR-902B / DSM 19102 / 434/Bu).